A 301-amino-acid polypeptide reads, in one-letter code: MVSQAAKILDGKALAQKIQLSLKEEIQTLQPKIGRPPGLAVLMVGDNPASAVYVRNKEKSCTKVGMASFGRHFPGETSQSELEQVIEELNQDSRVDGILIQLPLPDHLDGIALLHQINPEKDADGLHPTNLGRLVRGEPGLRSCTPAGVMALLEEYNLEVKGKHAVVIGRSILVGKPMGLMLLEENATVTIAHSLTQNLTELTRSADILVAAAGKANLITPEMVKPGAVVIDVGINRIEDESGKARLVGDVDYEGVAEVAQYITPVPGGIGPMTVAMLLSNTVYSYRQKEAGVERQKAGGN.

Residues 169-171, serine 194, and isoleucine 235 each bind NADP(+); that span reads GRS.

Belongs to the tetrahydrofolate dehydrogenase/cyclohydrolase family. In terms of assembly, homodimer.

It catalyses the reaction (6R)-5,10-methylene-5,6,7,8-tetrahydrofolate + NADP(+) = (6R)-5,10-methenyltetrahydrofolate + NADPH. It carries out the reaction (6R)-5,10-methenyltetrahydrofolate + H2O = (6R)-10-formyltetrahydrofolate + H(+). The protein operates within one-carbon metabolism; tetrahydrofolate interconversion. Functionally, catalyzes the oxidation of 5,10-methylenetetrahydrofolate to 5,10-methenyltetrahydrofolate and then the hydrolysis of 5,10-methenyltetrahydrofolate to 10-formyltetrahydrofolate. In Gloeothece citriformis (strain PCC 7424) (Cyanothece sp. (strain PCC 7424)), this protein is Bifunctional protein FolD.